A 154-amino-acid chain; its full sequence is Protein X (154 aa).

Residues P68–F117 form a mitochondrial targeting sequence region.

This sequence belongs to the orthohepadnavirus protein X family. As to quaternary structure, may form homodimer. May interact with host CEBPA, CFLAR, CREB1, DDB1, E4F1, HBXIP, HSPD1/HSP60, NFKBIA, POLR2E and SMAD4. Interacts with host SMC5-SMC6 complex and induces its degradation. Interacts with host TRPC4AP; leading to prevent ubiquitination of TRPC4AP. Interacts with host PLSCR1; this interaction promotes ubiquitination and degradation of HBx and impairs HBx-mediated cell proliferation. Post-translationally, a fraction may be phosphorylated in insect cells and HepG2 cells, a human hepatoblastoma cell line. Phosphorylated in vitro by host protein kinase C or mitogen-activated protein kinase. N-acetylated in insect cells.

Its subcellular location is the host cytoplasm. It localises to the host nucleus. It is found in the host mitochondrion. Its function is as follows. Multifunctional protein that plays a role in silencing host antiviral defenses and promoting viral transcription. Does not seem to be essential for HBV infection. May be directly involved in development of cirrhosis and liver cancer (hepatocellular carcinoma). Most of cytosolic activities involve modulation of cytosolic calcium. The effect on apoptosis is controversial depending on the cell types in which the studies have been conducted. May induce apoptosis by localizing in mitochondria and causing loss of mitochondrial membrane potential. May also modulate apoptosis by binding host CFLAR, a key regulator of the death-inducing signaling complex (DISC). Promotes viral transcription by using the host E3 ubiquitin ligase DDB1 to target the SMC5-SMC6 complex to proteasomal degradation. This host complex would otherwise bind to viral episomal DNA, and prevents its transcription. Moderately stimulates transcription of many different viral and cellular transcription elements. Promoters and enhancers stimulated by HBx contain DNA binding sites for NF-kappa-B, AP-1, AP-2, c-EBP, ATF/CREB, or the calcium-activated factor NF-AT. This is Protein X from Hepatitis B virus genotype D subtype ayw (isolate France/Tiollais/1979) (HBV-D).